Consider the following 81-residue polypeptide: X antigen family member 1 (81 aa).

K12 participates in a covalent cross-link: Glycyl lysine isopeptide (Lys-Gly) (interchain with G-Cter in SUMO2). Position 20 is a phosphoserine (S20). Residues K61 and K65 each participate in a glycyl lysine isopeptide (Lys-Gly) (interchain with G-Cter in SUMO2) cross-link.

This sequence belongs to the GAGE family. In terms of tissue distribution, in normal tissues, highly expressed in testis. Expressed also in many different types of cancers: highly expressed in breast cancer, prostate cancer and many types of lung cancers, including squamous cell carcinoma, small cell carcinoma, non-small cell carcinoma, and adenocarcinoma, as well as in Ewing's cell lines, in some Ewing's sarcoma patient samples, and in one of one alveolar rhabdomyosarcoma patient sample.

The sequence is that of X antigen family member 1 from Homo sapiens (Human).